A 1079-amino-acid polypeptide reads, in one-letter code: Intraflagellar transport protein 80 (1079 aa).

The tract at residues 495-514 (GDMIRPSTVQNQPSTQGLPN) is disordered. The segment covering 501–514 (STVQNQPSTQGLPN) has biased composition (polar residues).

The protein resides in the cell projection. The protein localises to the cilium. It is found in the flagellum. Its subcellular location is the cytoplasm. It localises to the cytoskeleton. The protein resides in the flagellum axoneme. The protein localises to the flagellum basal body. Its function is as follows. Component of the intraflagellar transport complex B (IFT-B) involved in flagellar assembly. This chain is Intraflagellar transport protein 80, found in Giardia intestinalis (strain ATCC 50803 / WB clone C6) (Giardia lamblia).